Consider the following 269-residue polypeptide: Ubiquinone/menaquinone biosynthesis C-methyltransferase UbiE (269 aa).

Residues Thr92, Asp113, and 141–142 (NA) contribute to the S-adenosyl-L-methionine site.

It belongs to the class I-like SAM-binding methyltransferase superfamily. MenG/UbiE family.

The enzyme catalyses a 2-demethylmenaquinol + S-adenosyl-L-methionine = a menaquinol + S-adenosyl-L-homocysteine + H(+). The catalysed reaction is a 2-methoxy-6-(all-trans-polyprenyl)benzene-1,4-diol + S-adenosyl-L-methionine = a 5-methoxy-2-methyl-3-(all-trans-polyprenyl)benzene-1,4-diol + S-adenosyl-L-homocysteine + H(+). Its pathway is quinol/quinone metabolism; menaquinone biosynthesis; menaquinol from 1,4-dihydroxy-2-naphthoate: step 2/2. It participates in cofactor biosynthesis; ubiquinone biosynthesis. Functionally, methyltransferase required for the conversion of demethylmenaquinol (DMKH2) to menaquinol (MKH2) and the conversion of 2-polyprenyl-6-methoxy-1,4-benzoquinol (DDMQH2) to 2-polyprenyl-3-methyl-6-methoxy-1,4-benzoquinol (DMQH2). This chain is Ubiquinone/menaquinone biosynthesis C-methyltransferase UbiE, found in Brucella canis (strain ATCC 23365 / NCTC 10854 / RM-666).